Consider the following 440-residue polypeptide: Protein disulfide-isomerase A6 (440 aa).

Positions 1 to 19 (MARLVLGLVSCTFFLAVSG) are cleaved as a signal peptide. Thioredoxin domains are found at residues 20–133 (LYSS…ALRQ) and 151–287 (QGRG…EDIA). A disulfide bridge connects residues C55 and C58. 3 positions are modified to phosphoserine: S129, S156, and S158. Residues 139 to 161 (LGGRSGGYSSGKQGRGDSSSKKD) form a disordered region. A compositionally biased stretch (basic and acidic residues) spans 152–161 (GRGDSSSKKD). Cysteines 190 and 193 form a disulfide. The interval 399-440 (GGGSFPTITPREPWDGKDGELPVEDDIDLSDVELDDLEKDEL) is disordered. Positions 419–440 (LPVEDDIDLSDVELDDLEKDEL) are enriched in acidic residues. S428 is subject to Phosphoserine. A Prevents secretion from ER motif is present at residues 437 to 440 (KDEL).

This sequence belongs to the protein disulfide isomerase family. In terms of assembly, part of a large chaperone multiprotein complex comprising DNAJB11, HSP90B1, HSPA5, HYOU, PDIA2, PDIA4, PDIA6, PPIB, SDF2L1, UGGT1 and very small amounts of ERP29, but not, or at very low levels, CALR nor CANX. Interacts with MICA on the surface of tumor cells, leading to MICA disulfide bond reduction which is required for its release from tumor cells. Interacts with ITGB3 following platelet stimulation. Interacts with ERN1; the interaction is direct. Interacts with EIF2AK3.

It is found in the endoplasmic reticulum lumen. The protein localises to the cell membrane. Its subcellular location is the melanosome. The enzyme catalyses Catalyzes the rearrangement of -S-S- bonds in proteins.. In terms of biological role, may function as a chaperone that inhibits aggregation of misfolded proteins. Negatively regulates the unfolded protein response (UPR) through binding to UPR sensors such as ERN1, which in turn inactivates ERN1 signaling. May also regulate the UPR via the EIF2AK3 UPR sensor. Plays a role in platelet aggregation and activation by agonists such as convulxin, collagen and thrombin. The chain is Protein disulfide-isomerase A6 (Pdia6) from Mus musculus (Mouse).